A 420-amino-acid polypeptide reads, in one-letter code: Threonine aspartase 1 (420 aa).

The segment at 1-23 (MTMEKGMSSGEGLPSRSSQVSAG) is disordered. The active-site Nucleophile is Thr-234.

The protein belongs to the Ntn-hydrolase family. Intramolecular proteolysis generates 2 subunits, alpha and beta, which reassemble through a non-covalent association to form the fully active enzyme.

In terms of biological role, protease responsible for KMT2A/MLL1 processing and activation. It also activates KMT2D/MLL2. Through substrate activation, it controls the expression of HOXA genes, and the expression of key cell cycle regulators including CCNA1, CCNB1, CCNE1 and CDKN2A. The protein is Threonine aspartase 1 (TASP1) of Homo sapiens (Human).